The following is a 103-amino-acid chain: Large ribosomal subunit protein bL21 (103 aa).

Belongs to the bacterial ribosomal protein bL21 family. As to quaternary structure, part of the 50S ribosomal subunit. Contacts protein L20.

Functionally, this protein binds to 23S rRNA in the presence of protein L20. The sequence is that of Large ribosomal subunit protein bL21 from Salmonella paratyphi A (strain ATCC 9150 / SARB42).